We begin with the raw amino-acid sequence, 176 residues long: Endoribonuclease YbeY (176 aa).

Positions 117, 121, and 127 each coordinate Zn(2+).

Belongs to the endoribonuclease YbeY family. Requires Zn(2+) as cofactor.

The protein localises to the cytoplasm. Its function is as follows. Single strand-specific metallo-endoribonuclease involved in late-stage 70S ribosome quality control and in maturation of the 3' terminus of the 16S rRNA. The chain is Endoribonuclease YbeY from Methylocella silvestris (strain DSM 15510 / CIP 108128 / LMG 27833 / NCIMB 13906 / BL2).